The following is a 963-amino-acid chain: Protein translocase subunit SecA (963 aa).

ATP-binding positions include Gln87, 105 to 109 (GEGKT), and Asp512. Disordered regions lie at residues 868-909 (GPVM…EDFT) and 924-963 (QFVG…CHGS). Over residues 874–886 (PDEEEDGDEDSVE) the composition is skewed to acidic residues. Residues Cys949, Cys951, Cys960, and His961 each contribute to the Zn(2+) site.

Belongs to the SecA family. Monomer and homodimer. Part of the essential Sec protein translocation apparatus which comprises SecA, SecYEG and auxiliary proteins SecDF. Other proteins may also be involved. Zn(2+) serves as cofactor.

It is found in the cell inner membrane. Its subcellular location is the cytoplasm. It carries out the reaction ATP + H2O + cellular proteinSide 1 = ADP + phosphate + cellular proteinSide 2.. Part of the Sec protein translocase complex. Interacts with the SecYEG preprotein conducting channel. Has a central role in coupling the hydrolysis of ATP to the transfer of proteins into and across the cell membrane, serving as an ATP-driven molecular motor driving the stepwise translocation of polypeptide chains across the membrane. This chain is Protein translocase subunit SecA, found in Solibacter usitatus (strain Ellin6076).